A 1492-amino-acid polypeptide reads, in one-letter code: MSILLEGYLEKQGEKGIYKSYKNRYFSLAKNGFDLHYFESPPPKDVSFSSSTQSSTALSLGYLDIRQVTSIKKVDGNFVFHVEVPGRVYILRAKNDTEINYWIEGIKDAIKYHEINSSQVQVLDGLIKTKDNDIIKLREKIKHLNEKHQESEKRYQEKEKKFEEQRTIEIQETTKKEQEIKSLTLQLSSKDESMKSLEKQVEKLVDIEHRSEIEQTKKDNEILKLTEKIKEIQLIENLNSTNDSKVNQLLEDNIKRLQESLNEIKDENNDLQSLIDTQKQQFEKRINQYQLEIQDKENELNEMNQQSLSQVKSFQQSLQQSQLDLENDKNQFSTKLQLVNNEIQSLKSIVDDKLKEIQLKDNQLTQLNQQHEIDNNKNNQMILELNDNISKISNQLNEKDNKIQELSKQSIDKQKEIENSTSSSDQLQLKLNDISNELLEKLNDINQLSNKLQDKENQILEINNKLNEKENQLISKDNQLNQLIENNESSSDELKLKLNQLSDELQEKDEKLLNNQSVINELQSNLNENQNKINELIENNQSSSDELKLKLNQLSDKLQEKDEKLKSLESSIIERDEKIDQLQDNLNEKQDKINELVENNESSSDELQSKLIQLSDQLQEKDEKLLNNQSIINELQSNLNENQNKINELIENNQSSSDELNSKLIKLSDELKDKNENVRSLETSIIENQDKLDQLIQSNQVTVNELQSKLNEKEININQLIENNQSSLDELQSKLNEKQNEINQLIENNQSSSDELQSKLNEKHQEISELQSKLNELIENNESSSDELQSKLIQLSDELKEKDEKLKSLDSIIIENQEKLVQLTKSNQDSLDELQSKLNEKQNEINELIENNQSSSNELQSKLNEKQNEINLLIENNQSSSDELQSKLNEKHQEINELQSKLNEKQNKINELVENNESSSDELQSKLIQLSDQLQEKENQLKSFESSIIERDEKLNQLQSKLNEKQNEIDQITENNQSSLDELQSNLNEKQNEINQLIENNQSSLDELQSKLNEKLNEINEKDNKINELIQTNESLSKDQQSKFENLEQELEEKNNKILDLNSQIIDVNHQFSEKENELNQLQLKLIEKDQEIENQNNKIIDINNQLNEKEKEININNDNDNNNEENIQLIEELKEKLQDLENELNLEKDTVNEKNDDINELKEEIKLISEKLSEKEQELNEMINDYDESLNEINDQKDLVKSLNERLTNAHLKINEKDNEIHSLSKEGFNEIQSQLNLITNQLSEKDNLLIEKSQIISDLELQLRESYKERSSSSSLHQQQQMISPDLSNSNDELIVEKEEIINELKEKNQQLEQQLQDLCQQFNKNKQENELKCQQLEEENDGWKNEIDTLNQRLKTQSLNTSPDSSELQQQLDIISNQELNIKQLEKELQDKSGKIDNLEYQVEEMNKQYHIDINQKTNESSEKLQSIQLEIDTIREKYFFAIARSLKLQGAQMGWSMSRSIFDMFDEIKSLNINFDEWPIWISNQLEK.

The 110-residue stretch at 2–111 (SILLEGYLEK…WIEGIKDAIK (110 aa)) folds into the PH domain. LRR repeat units follow at residues 123 to 144 (LDGL…IKHL), 180 to 204 (IKSL…VEKL), 258 to 284 (QESL…QFEK), 329 to 351 (KNQF…SIVD), 352 to 375 (DKLK…EIDN), 389 to 413 (ISKI…SIDK), 439 to 462 (LEKL…ILEI), 519 to 543 (INEL…NQSS), 551 to 575 (LNQL…IIER), 579 to 603 (IDQL…NESS), 632 to 656 (INEL…NQSS), 728 to 752 (LDEL…NQSS), 806 to 830 (LKSL…NQDS), 831 to 855 (LDEL…NQSS), 895 to 919 (INEL…NESS), 927 to 951 (LIQL…IIER), 955 to 979 (LNQL…NQSS), 1013 to 1036 (NEKL…NESL), 1044 to 1068 (FENL…IIDV), 1138 to 1164 (LQDL…ELKE), and 1210 to 1232 (NAHL…GFNE). Residues 1272-1292 (RSSSSSLHQQQQMISPDLSNS) are disordered. Over residues 1274–1286 (SSSSLHQQQQMIS) the composition is skewed to low complexity. 2 LRR repeats span residues 1424–1444 (SSEK…KYFF) and 1445–1468 (AIAR…IFDM).

This chain is Putative leucine-rich repeat-containing protein DDB_G0290503, found in Dictyostelium discoideum (Social amoeba).